Consider the following 761-residue polypeptide: Probable ubiquitin carboxyl-terminal hydrolase creB (761 aa).

Residues 1-45 (MGSFLRSFRHNGGSTAPSVGAVPAKKEPQPPPMTPLEKRLLDMGP) are disordered. The span at 36–45 (LEKRLLDMGP) shows a compositional bias: basic and acidic residues. Residues 55 to 468 (YGMENYGNTC…CAYVLFYQET (414 aa)) form the USP domain. Cys-64 (nucleophile) is an active-site residue. Disordered stretches follow at residues 113–146 (EAEAQAEKQKAANAQRPGMPPNPQQKPEDKDSPE) and 242–269 (PLMEKSLPAPETADSVDQSSSTGSKTPN). Residues 256-269 (SVDQSSSTGSKTPN) are compositionally biased toward polar residues. His-419 functions as the Proton acceptor in the catalytic mechanism. Residues 496 to 761 (LKQNGFPQSP…LRKKSFSILS (266 aa)) are disordered. Positions 555–566 (PLSPVPPVPPIP) are enriched in pro residues. Positions 577–640 (KNDALAKREE…ASKAEEDRRL (64 aa)) form a coiled coil. Positions 580–649 (ALAKREEKER…LSTENGKEKQ (70 aa)) are enriched in basic and acidic residues. Basic residues predominate over residues 655–666 (RLKRGSKSLSHR). The span at 692-710 (SQSGPTSEQQQQQRQQSPP) shows a compositional bias: low complexity. The span at 712 to 722 (HDQPPNSPQPG) shows a compositional bias: pro residues. Residues 725-743 (TIREDEQVNHKDSKHERTG) show a composition bias toward basic and acidic residues. A compositionally biased stretch (basic residues) spans 744-761 (HGKWRSFSLRKKSFSILS).

The protein belongs to the peptidase C19 family. Interacts with creA, creC and qutD.

It carries out the reaction Thiol-dependent hydrolysis of ester, thioester, amide, peptide and isopeptide bonds formed by the C-terminal Gly of ubiquitin (a 76-residue protein attached to proteins as an intracellular targeting signal).. Functionally, ubiquitin thioesterase component of the regulatory network controlling carbon source utilization through ubiquitination and deubiquitination involving creA, creB, creC, creD and acrB. Deubiquitinates the creA catabolic repressor and the quinate permease qutD. Also plays a role in response to carbon starvation and the control of extracellular proteases activity. This Neosartorya fischeri (strain ATCC 1020 / DSM 3700 / CBS 544.65 / FGSC A1164 / JCM 1740 / NRRL 181 / WB 181) (Aspergillus fischerianus) protein is Probable ubiquitin carboxyl-terminal hydrolase creB (creB).